A 510-amino-acid polypeptide reads, in one-letter code: MTSSVSFASFRFPWLLKTFVLMVGLATVAFMVRKVSLTTDFSTFKPKFPEPARVDPVLKLLPEEHLRKLFTYSDIWLFPKNQCDCNSGKLRMKYKFQDAYNQKDLPAVNARRQAEFEHFQRREGLPRPPPLLAPPNLPFGYPVHGVEVMPLHTILIPGLQYEGPDAPVYEVILKASLGTLNTLADVPDDEVQGRGQRQLTISTRHRKVLNFILQHVTYTSTEYYLHKVDTVSMEYESSVAKFPVTIKQQTVPKLYDPGPERKIRNLVTIATKTFLRPHKLKILLQSIRKYYPDITVIVADDSKEPLEINDDYVEYYTMPFGKGWFAGRNLAISQVTTKYVLWVDDDFLFSDKTKIEVLVDVLEKTELDVVGGSVQGNTYQFRLLYEQTKNGSCLHQRWGSFQALDGFPGCTLTSGVVNFFLAHTEQLRRVGFDPILQRVAHGEFFIDGLGRLLVGSCPGVIINHQVRTPPKDPKLAALEKTYDKYRANTNSVIQFKVALQYFKNHLYCST.

Residues 1-15 are Cytoplasmic-facing; sequence MTSSVSFASFRFPWL. The chain crosses the membrane as a helical; Signal-anchor for type II membrane protein span at residues 16–32; sequence LKTFVLMVGLATVAFMV. Over 33-510 the chain is Lumenal; sequence RKVSLTTDFS…YFKNHLYCST (478 aa). N-linked (GlcNAc...) asparagine glycosylation is present at N390.

Belongs to the glycosyltransferase 2 family. As to quaternary structure, homodimer; disulfide-linked.

Its subcellular location is the golgi apparatus. The protein localises to the trans-Golgi network membrane. It catalyses the reaction an N-acetyl-alpha-neuraminyl-(2-&gt;3)-beta-D-galactosyl derivative + UDP-N-acetyl-alpha-D-galactosamine = an N-acetyl-beta-D-galactosaminyl-(1-&gt;4)-[N-acetyl-alpha-neuraminyl-(2-&gt;3)]-beta-D-galactosyl derivative + UDP + H(+). It carries out the reaction a 3-O-{alpha-Neu5Ac-(2-&gt;3)-beta-D-Gal-(1-&gt;3)-[alpha-Neu5Ac-(2-&gt;6)]-alpha-D-GalNAc}-L-seryl-[protein] + UDP-N-acetyl-alpha-D-galactosamine = a 3-O-{[alpha-Neu5Ac-(2-&gt;3)]-beta-D-GalNAc-(1-&gt;4)-beta-D-Gal-(1-&gt;3)-[alpha-Neu5Ac-(2-&gt;6)]-alpha-D-GalNAc}-L-seryl-[protein] + UDP + H(+). The enzyme catalyses a 3-O-{alpha-Neu5Ac-(2-&gt;3)-beta-D-Gal-(1-&gt;3)-[alpha-Neu5Ac-(2-&gt;6)]-alpha-D-GalNAc}-L-threonyl-[protein] + UDP-N-acetyl-alpha-D-galactosamine = a 3-O-{[alpha-Neu5Ac-(2-&gt;3)]-beta-D-GalNAc-(1-&gt;4)-beta-D-Gal-(1-&gt;3)-[alpha-Neu5Ac-(2-&gt;6)]-alpha-D-GalNAc}-L-threonyl-[protein] + UDP + H(+). The catalysed reaction is a neolactoside IV(3)-alpha-NeuAc-nLc4Cer + UDP-N-acetyl-alpha-D-galactosamine = a neolactoside IV(4)-GalNAc,IV(3)-alpha-NeuAc-nLc4Cer + UDP + H(+). The protein operates within protein modification; protein glycosylation. It participates in glycolipid biosynthesis. Its function is as follows. Beta-1,4 N-acetylgalactosaminyltransferase involved in the biosynthesis of T-lymphocyte CT glycan antigen carried by CD45 family of protein phosphatases. Catalyzes the transfer of N-acetylgalactosamine (GalNAc) group in a beta-1,4-linkage from UDP-GalNAc to the galactose residue of NeuAcalpha2-&gt;3Gal-R to form GalNAcbeta1-&gt;4(NeuAcalpha2-&gt;3)Gal-R glycan epitope. This Mus musculus (Mouse) protein is Beta-1,4 N-acetylgalactosaminyltransferase 2.